A 100-amino-acid polypeptide reads, in one-letter code: Large ribosomal subunit protein bL28 (100 aa).

The interval 1–25 (MTRRCDITGKSVLSGNNVSHANNKS) is disordered. Polar residues predominate over residues 11-22 (SVLSGNNVSHAN).

The protein belongs to the bacterial ribosomal protein bL28 family.

In Acidiphilium cryptum (strain JF-5), this protein is Large ribosomal subunit protein bL28.